A 252-amino-acid chain; its full sequence is Phosphate import ATP-binding protein PstB 1 (252 aa).

The region spanning leucine 6 to isoleucine 247 is the ABC transporter domain. Position 38–45 (glycine 38–serine 45) interacts with ATP.

The protein belongs to the ABC transporter superfamily. Phosphate importer (TC 3.A.1.7) family. In terms of assembly, the complex is composed of two ATP-binding proteins (PstB), two transmembrane proteins (PstC and PstA) and a solute-binding protein (PstS).

The protein localises to the cell membrane. The catalysed reaction is phosphate(out) + ATP + H2O = ADP + 2 phosphate(in) + H(+). Its function is as follows. Part of the ABC transporter complex PstSACB involved in phosphate import. Responsible for energy coupling to the transport system. The protein is Phosphate import ATP-binding protein PstB 1 of Streptococcus agalactiae serotype Ia (strain ATCC 27591 / A909 / CDC SS700).